Reading from the N-terminus, the 185-residue chain is Ribosome-recycling factor (185 aa).

The protein belongs to the RRF family.

It localises to the cytoplasm. Its function is as follows. Responsible for the release of ribosomes from messenger RNA at the termination of protein biosynthesis. May increase the efficiency of translation by recycling ribosomes from one round of translation to another. The chain is Ribosome-recycling factor from Listeria innocua serovar 6a (strain ATCC BAA-680 / CLIP 11262).